The chain runs to 296 residues: Enoyl-CoA hydratase domain-containing protein 2, mitochondrial (296 aa).

Residues 1 to 17 (MLRVLPRALRLPCSWRF) constitute a mitochondrion transit peptide. The residue at position 101 (Lys-101) is an N6-acetyllysine; alternate. Residue Lys-101 is modified to N6-succinyllysine; alternate.

Belongs to the enoyl-CoA hydratase/isomerase family.

It localises to the mitochondrion. The protein is Enoyl-CoA hydratase domain-containing protein 2, mitochondrial (Echdc2) of Mus musculus (Mouse).